The primary structure comprises 309 residues: Methionyl-tRNA formyltransferase (309 aa).

109–112 (SLLP) lines the (6S)-5,6,7,8-tetrahydrofolate pocket.

It belongs to the Fmt family.

It carries out the reaction L-methionyl-tRNA(fMet) + (6R)-10-formyltetrahydrofolate = N-formyl-L-methionyl-tRNA(fMet) + (6S)-5,6,7,8-tetrahydrofolate + H(+). Attaches a formyl group to the free amino group of methionyl-tRNA(fMet). The formyl group appears to play a dual role in the initiator identity of N-formylmethionyl-tRNA by promoting its recognition by IF2 and preventing the misappropriation of this tRNA by the elongation apparatus. The chain is Methionyl-tRNA formyltransferase from Clostridium perfringens (strain 13 / Type A).